A 208-amino-acid chain; its full sequence is MGGKWSKSSIVGWPAIRERMRRTPPTPPAAEGVGAVSQDLERRGAITSSNTRANNPDLAWLEAQEEDEVGFPVRPQVPLRPMTYKGAVDLSHFLKEKGGLEGLIYSKRRQEILDLWVYHTQGYFPDWQNYTPGPGIRYPLTMGWCFKLVPVDPEEVEKANEGENNCLLHPMSQHGMEDEDKEVLKWEFDSRLALRHIARERHPEYYQD.

Gly2 is lipidated: N-myristoyl glycine; by host. At Ser6 the chain carries Phosphoserine; by host. Residues Ile16–Thr51 are disordered. Residues Glu65 to Glu68 form an acidic; interacts with host PACS1 and PACS2; stabilizes the interaction of NEF/MHC-I with host AP1M1; necessary for MHC-I internalization region. Residues Pro72–Pro81 are SH3-binding; interaction with Src family tyrosine kinases. A PxxP; stabilizes the interaction of NEF/MHC-I with host AP1M1; necessary for MHC-I internalization motif is present at residues Pro75–Pro78. A mediates dimerization, Nef-PTE1 interaction region spans residues Glu111–Trp127. A binding to ATP6V1H region spans residues Val151–Val183. Positions Leu167 to Leu168 match the Dileucine internalization motif; necessary for CD4 internalization motif. The short motif at Glu177–Asp178 is the Diacidic; necessary for CD4 internalization element.

This sequence belongs to the lentivirus primate group Nef protein family. Monomer; cytosolic form. Homodimer; membrane bound form. Interacts with Nef associated p21-activated kinase (PAK2); this interaction activates PAK2. Associates with the Nef-MHC-I-AP1 complex; this complex is required for MHC-I internalization. Interacts (via C-terminus) with host PI3-kinase. Interacts with host PACS1; this interaction seems to be weak. Interacts with host PACS2. Interacts with host LCK and MAPK3; these interactions inhibit the kinase activity of the latter. Interacts with host ATP6V1H; this interaction may play a role in CD4 endocytosis. Associates with the CD4-Nef-AP2 complex; this complex is required for CD4 internalization. Interacts with host AP2 subunit alpha and AP2 subunit sigma2. Interacts with TCR-zeta chain; this interaction up-regulates the Fas ligand (FasL) surface expression. Interacts with host HCK, LYN, and SRC; these interactions activate the Src family kinases. Interacts with MAP3K5; this interaction inhibits the Fas and TNFR-mediated death signals. Interacts with beta-COP and PTE1. Interacts with human RACK1; this increases Nef phosphorylation by PKC. Interacts with TP53; this interaction decreases the half-life of TP53, protecting the infected cell against p53-mediated apoptosis. The virion-associated Nef proteins are cleaved by the viral protease to release the soluble C-terminal core protein. Nef is probably cleaved concomitantly with viral structural proteins on maturation of virus particles. Post-translationally, myristoylated. In terms of processing, phosphorylated on serine residues, probably by host PKCdelta and theta.

Its subcellular location is the host cell membrane. The protein localises to the virion. It is found in the secreted. The protein resides in the host Golgi apparatus membrane. Its function is as follows. Factor of infectivity and pathogenicity, required for optimal virus replication. Alters numerous pathways of T-lymphocyte function and down-regulates immunity surface molecules in order to evade host defense and increase viral infectivity. Alters the functionality of other immunity cells, like dendritic cells, monocytes/macrophages and NK cells. In infected CD4(+) T-lymphocytes, down-regulates the surface MHC-I, mature MHC-II, CD4, CD28, CCR5 and CXCR4 molecules. Mediates internalization and degradation of host CD4 through the interaction of with the cytoplasmic tail of CD4, the recruitment of AP-2 (clathrin adapter protein complex 2), internalization through clathrin coated pits, and subsequent transport to endosomes and lysosomes for degradation. Diverts host MHC-I molecules to the trans-Golgi network-associated endosomal compartments by an endocytic pathway to finally target them for degradation. MHC-I down-regulation may involve AP-1 (clathrin adapter protein complex 1) or possibly Src family kinase-ZAP70/Syk-PI3K cascade recruited by PACS2. In consequence infected cells are masked for immune recognition by cytotoxic T-lymphocytes. Decreasing the number of immune receptors also prevents reinfection by more HIV particles (superinfection). Down-regulates host SERINC3 and SERINC5 thereby excluding these proteins from the viral particles. Virion infectivity is drastically higher when SERINC3 or SERINC5 are excluded from the viral envelope, because these host antiviral proteins impair the membrane fusion event necessary for subsequent virion penetration. In terms of biological role, bypasses host T-cell signaling by inducing a transcriptional program nearly identical to that of anti-CD3 cell activation. Interaction with TCR-zeta chain up-regulates the Fas ligand (FasL). Increasing surface FasL molecules and decreasing surface MHC-I molecules on infected CD4(+) cells send attacking cytotoxic CD8+ T-lymphocytes into apoptosis. Functionally, plays a role in optimizing the host cell environment for viral replication without causing cell death by apoptosis. Protects the infected cells from apoptosis in order to keep them alive until the next virus generation is ready to strike. Inhibits the Fas and TNFR-mediated death signals by blocking MAP3K5/ASK1. Decreases the half-life of TP53, protecting the infected cell against p53-mediated apoptosis. Inhibits the apoptotic signals regulated by the Bcl-2 family proteins through the formation of a Nef/PI3-kinase/PAK2 complex that leads to activation of PAK2 and induces phosphorylation of host BAD. Its function is as follows. Extracellular Nef protein targets CD4(+) T-lymphocytes for apoptosis by interacting with CXCR4 surface receptors. The polypeptide is Protein Nef (Human immunodeficiency virus type 1 group M subtype F1 (isolate 93BR020) (HIV-1)).